A 408-amino-acid polypeptide reads, in one-letter code: LL-diaminopimelate aminotransferase (408 aa).

Positions 15 and 42 each coordinate substrate. Residues tyrosine 72, 108 to 109 (SK), tyrosine 132, asparagine 187, tyrosine 218, and 246 to 248 (SFS) each bind pyridoxal 5'-phosphate. Residues lysine 109, tyrosine 132, and asparagine 187 each contribute to the substrate site. Position 249 is an N6-(pyridoxal phosphate)lysine (lysine 249). Arginine 257 and asparagine 292 together coordinate pyridoxal 5'-phosphate. Substrate is bound by residues asparagine 292 and arginine 388.

It belongs to the class-I pyridoxal-phosphate-dependent aminotransferase family. LL-diaminopimelate aminotransferase subfamily. Homodimer. Requires pyridoxal 5'-phosphate as cofactor.

It carries out the reaction (2S,6S)-2,6-diaminopimelate + 2-oxoglutarate = (S)-2,3,4,5-tetrahydrodipicolinate + L-glutamate + H2O + H(+). The protein operates within amino-acid biosynthesis; L-lysine biosynthesis via DAP pathway; LL-2,6-diaminopimelate from (S)-tetrahydrodipicolinate (aminotransferase route): step 1/1. In terms of biological role, involved in the synthesis of meso-diaminopimelate (m-DAP or DL-DAP), required for both lysine and peptidoglycan biosynthesis. Catalyzes the direct conversion of tetrahydrodipicolinate to LL-diaminopimelate. The protein is LL-diaminopimelate aminotransferase of Prochlorococcus marinus (strain MIT 9301).